We begin with the raw amino-acid sequence, 794 residues long: DNA ligase (794 aa).

Residues aspartate 35–aspartate 39, serine 84–leucine 85, and glutamate 126 each bind NAD(+). Lysine 128 functions as the N6-AMP-lysine intermediate in the catalytic mechanism. Residues arginine 149, glutamate 186, lysine 302, and lysine 326 each coordinate NAD(+). Residues cysteine 420, cysteine 423, cysteine 450, and cysteine 456 each contribute to the Zn(2+) site. In terms of domain architecture, BRCT spans valine 711–histidine 794.

The protein belongs to the NAD-dependent DNA ligase family. LigA subfamily. Requires Mg(2+) as cofactor. The cofactor is Mn(2+).

The enzyme catalyses NAD(+) + (deoxyribonucleotide)n-3'-hydroxyl + 5'-phospho-(deoxyribonucleotide)m = (deoxyribonucleotide)n+m + AMP + beta-nicotinamide D-nucleotide.. Its function is as follows. DNA ligase that catalyzes the formation of phosphodiester linkages between 5'-phosphoryl and 3'-hydroxyl groups in double-stranded DNA using NAD as a coenzyme and as the energy source for the reaction. It is essential for DNA replication and repair of damaged DNA. The sequence is that of DNA ligase from Pseudomonas paraeruginosa (strain DSM 24068 / PA7) (Pseudomonas aeruginosa (strain PA7)).